Consider the following 707-residue polypeptide: U-box domain-containing protein 2 (707 aa).

The 75-residue stretch at 239–313 (RVPSDFRCSL…ASWCETNNVY (75 aa)) folds into the U-box domain. ARM repeat units lie at residues 453–492 (TDNR…NLSI), 494–534 (DNNK…SLSV), 536–575 (EEYK…NLSI), 577–615 (HENK…NLAT), and 617–656 (REGK…QLCT).

It catalyses the reaction S-ubiquitinyl-[E2 ubiquitin-conjugating enzyme]-L-cysteine + [acceptor protein]-L-lysine = [E2 ubiquitin-conjugating enzyme]-L-cysteine + N(6)-ubiquitinyl-[acceptor protein]-L-lysine.. It participates in protein modification; protein ubiquitination. Functions as an E3 ubiquitin ligase. This chain is U-box domain-containing protein 2 (PUB2), found in Arabidopsis thaliana (Mouse-ear cress).